Consider the following 494-residue polypeptide: Ketol-acid reductoisomerase (NADP(+)) (494 aa).

Positions 14–208 constitute a KARI N-terminal Rossmann domain; the sequence is LDQLGRCRFM…GGHRAGCLES (195 aa). Residues 45-48, Arg-68, Arg-76, Ser-78, and 108-110 contribute to the NADP(+) site; these read CGAQ and DKQ. Residue His-132 is part of the active site. Gly-158 is a binding site for NADP(+). 2 KARI C-terminal knotted domains span residues 209 to 344 and 345 to 487; these read SFVA…NYPE and TDVE…MTDM. Residues Asp-217, Glu-221, Glu-389, and Glu-393 each coordinate Mg(2+). Residue Ser-414 participates in substrate binding.

Belongs to the ketol-acid reductoisomerase family. Requires Mg(2+) as cofactor.

The catalysed reaction is (2R)-2,3-dihydroxy-3-methylbutanoate + NADP(+) = (2S)-2-acetolactate + NADPH + H(+). It catalyses the reaction (2R,3R)-2,3-dihydroxy-3-methylpentanoate + NADP(+) = (S)-2-ethyl-2-hydroxy-3-oxobutanoate + NADPH + H(+). It functions in the pathway amino-acid biosynthesis; L-isoleucine biosynthesis; L-isoleucine from 2-oxobutanoate: step 2/4. The protein operates within amino-acid biosynthesis; L-valine biosynthesis; L-valine from pyruvate: step 2/4. In terms of biological role, involved in the biosynthesis of branched-chain amino acids (BCAA). Catalyzes an alkyl-migration followed by a ketol-acid reduction of (S)-2-acetolactate (S2AL) to yield (R)-2,3-dihydroxy-isovalerate. In the isomerase reaction, S2AL is rearranged via a Mg-dependent methyl migration to produce 3-hydroxy-3-methyl-2-ketobutyrate (HMKB). In the reductase reaction, this 2-ketoacid undergoes a metal-dependent reduction by NADPH to yield (R)-2,3-dihydroxy-isovalerate. This Vibrio parahaemolyticus serotype O3:K6 (strain RIMD 2210633) protein is Ketol-acid reductoisomerase (NADP(+)).